We begin with the raw amino-acid sequence, 105 residues long: Probable tetrachloroethene reductive dehalogenase membrane anchor protein (105 aa).

The next 3 membrane-spanning stretches (helical) occupy residues 3 to 23, 35 to 55, and 66 to 86; these read IYDV…QYGI, IPLQ…LAWG, and AIGM…IITY.

This sequence belongs to the PceB family.

It localises to the cell membrane. Its function is as follows. May act as a membrane anchor for the tetrachloroethene reductive dehalogenase PceA. This chain is Probable tetrachloroethene reductive dehalogenase membrane anchor protein, found in Desulfitobacterium hafniense (Desulfitobacterium frappieri).